We begin with the raw amino-acid sequence, 1650 residues long: Phosphatidylinositol 3,4,5-trisphosphate-dependent Rac exchanger 1 protein (1650 aa).

A compositionally biased stretch (gly residues) spans 1–19 (MEAPGSGGGDGGGDPGGDG). The segment at 1 to 33 (MEAPGSGGGDGGGDPGGDGAHPDARGPVSGPCA) is disordered. Residues 44–235 (LRLCVLNEIL…KTVCSNINET (192 aa)) form the DH domain. In terms of domain architecture, PH spans 266 to 387 (ELLLQGNLLK…WLDALIRERE (122 aa)). Ser314 is subject to Phosphoserine. DEP domains follow at residues 416 to 491 (MSKK…RFRY) and 518 to 592 (SLYA…RFHA). Positions 620 to 698 (RLLIPPQEDD…SRRPLRLLVA (79 aa)) constitute a PDZ domain. The disordered stretch occupies residues 793–813 (ARASQGAPDEDPQEDDQPDSA). Residues 800-810 (PDEDPQEDDQP) show a composition bias toward acidic residues. Position 991 is a phosphoserine (Ser991). 2 disordered regions span residues 1022 to 1047 (SPAV…GAPS) and 1099 to 1129 (PTSA…EVDR). The segment covering 1030–1047 (QGQGLNDSSYGSASGAPS) has biased composition (polar residues). Low complexity predominate over residues 1109–1122 (PSLVEETSSSPPVS). 2 positions are modified to phosphoserine: Ser1186 and Ser1191.

Interacts preferentially with RAC2. Interacts with RAC1. Interacts with AUTS2.

It localises to the cytoplasm. It is found in the cytosol. The protein localises to the cell membrane. Functions as a RAC guanine nucleotide exchange factor (GEF), which activates the Rac proteins by exchanging bound GDP for free GTP. Its activity is synergistically activated by phosphatidylinositol 3,4,5-trisphosphate and the beta gamma subunits of heterotrimeric G protein. May function downstream of heterotrimeric G proteins in neutrophils. The protein is Phosphatidylinositol 3,4,5-trisphosphate-dependent Rac exchanger 1 protein (Prex1) of Mus musculus (Mouse).